We begin with the raw amino-acid sequence, 305 residues long: Oxygen-dependent coproporphyrinogen-III oxidase (305 aa).

Serine 94 is a substrate binding site. A divalent metal cation contacts are provided by histidine 98 and histidine 108. The active-site Proton donor is histidine 108. Residue 110–112 (NVR) participates in substrate binding. A divalent metal cation contacts are provided by histidine 147 and histidine 177. The important for dimerization stretch occupies residues 242 to 277 (YVEFNLVYDRGTLFGLQTGGRTESILMSMPPLVRWE). 260 to 262 (GGR) provides a ligand contact to substrate.

Belongs to the aerobic coproporphyrinogen-III oxidase family. Homodimer. A divalent metal cation is required as a cofactor.

Its subcellular location is the cytoplasm. It catalyses the reaction coproporphyrinogen III + O2 + 2 H(+) = protoporphyrinogen IX + 2 CO2 + 2 H2O. Its pathway is porphyrin-containing compound metabolism; protoporphyrin-IX biosynthesis; protoporphyrinogen-IX from coproporphyrinogen-III (O2 route): step 1/1. In terms of biological role, involved in the heme biosynthesis. Catalyzes the aerobic oxidative decarboxylation of propionate groups of rings A and B of coproporphyrinogen-III to yield the vinyl groups in protoporphyrinogen-IX. In Shewanella denitrificans (strain OS217 / ATCC BAA-1090 / DSM 15013), this protein is Oxygen-dependent coproporphyrinogen-III oxidase.